Consider the following 184-residue polypeptide: Bifunctional protein PyrR (184 aa).

The PRPP-binding signature appears at 98–110 (VVLVDDVLYTGRT).

It belongs to the purine/pyrimidine phosphoribosyltransferase family. PyrR subfamily.

The catalysed reaction is UMP + diphosphate = 5-phospho-alpha-D-ribose 1-diphosphate + uracil. Its function is as follows. Regulates the transcription of the pyrimidine nucleotide (pyr) operon in response to exogenous pyrimidines. Also displays a weak uracil phosphoribosyltransferase activity which is not physiologically significant. This is Bifunctional protein PyrR from Roseiflexus castenholzii (strain DSM 13941 / HLO8).